Consider the following 1396-residue polypeptide: DNA-directed RNA polymerase subunit beta' (1396 aa).

Positions 72, 74, 87, and 90 each coordinate Zn(2+). Residues Asp-463, Asp-465, and Asp-467 each contribute to the Mg(2+) site. Cys-814, Cys-889, Cys-896, and Cys-899 together coordinate Zn(2+).

This sequence belongs to the RNA polymerase beta' chain family. In terms of assembly, the RNAP catalytic core consists of 2 alpha, 1 beta, 1 beta' and 1 omega subunit. When a sigma factor is associated with the core the holoenzyme is formed, which can initiate transcription. Requires Mg(2+) as cofactor. It depends on Zn(2+) as a cofactor.

The catalysed reaction is RNA(n) + a ribonucleoside 5'-triphosphate = RNA(n+1) + diphosphate. Functionally, DNA-dependent RNA polymerase catalyzes the transcription of DNA into RNA using the four ribonucleoside triphosphates as substrates. This is DNA-directed RNA polymerase subunit beta' from Chlamydia trachomatis serovar L2b (strain UCH-1/proctitis).